The chain runs to 851 residues: DNA mismatch repair protein MutS (851 aa).

602 to 609 (GPNMSGKS) is a binding site for ATP.

It belongs to the DNA mismatch repair MutS family.

Functionally, this protein is involved in the repair of mismatches in DNA. It is possible that it carries out the mismatch recognition step. This protein has a weak ATPase activity. The sequence is that of DNA mismatch repair protein MutS from Streptococcus pyogenes serotype M12 (strain MGAS2096).